We begin with the raw amino-acid sequence, 128 residues long: DNA-directed RNA polymerase subunit omega (128 aa).

The protein belongs to the RNA polymerase subunit omega family. The RNAP catalytic core consists of 2 alpha, 1 beta, 1 beta' and 1 omega subunit. When a sigma factor is associated with the core the holoenzyme is formed, which can initiate transcription.

The catalysed reaction is RNA(n) + a ribonucleoside 5'-triphosphate = RNA(n+1) + diphosphate. Its function is as follows. Promotes RNA polymerase assembly. Latches the N- and C-terminal regions of the beta' subunit thereby facilitating its interaction with the beta and alpha subunits. This is DNA-directed RNA polymerase subunit omega from Azorhizobium caulinodans (strain ATCC 43989 / DSM 5975 / JCM 20966 / LMG 6465 / NBRC 14845 / NCIMB 13405 / ORS 571).